Consider the following 942-residue polypeptide: Sucrose synthase 6 (942 aa).

Residues 281–759 (TVFNVVIFSV…GLKRIYECYT (479 aa)) are GT-B glycosyltransferase. Positions 830–862 (TTNLGAGSKQKEVTETEKTKQKSKDGQEQHDVK) are disordered. The span at 838–862 (KQKEVTETEKTKQKSKDGQEQHDVK) shows a compositional bias: basic and acidic residues.

It belongs to the glycosyltransferase 1 family. Plant sucrose synthase subfamily. In terms of tissue distribution, detected in the whole plant but more precisely confined to the vasculature in cotyledons, leaves, petals, anthers and roots.

The protein localises to the secreted. It localises to the cell wall. The catalysed reaction is an NDP-alpha-D-glucose + D-fructose = a ribonucleoside 5'-diphosphate + sucrose + H(+). In terms of biological role, sucrose-cleaving enzyme that provides UDP-glucose and fructose for various metabolic pathways. Functions in callose synthesis at the site of phloem sieve elements. The chain is Sucrose synthase 6 (SUS6) from Arabidopsis thaliana (Mouse-ear cress).